We begin with the raw amino-acid sequence, 302 residues long: Protease HtpX homolog (302 aa).

Residues 27–47 form a helical membrane-spanning segment; it reads LLMAIGGIIGGTAGMLIALII. H141 lines the Zn(2+) pocket. E142 is a catalytic residue. H145 lines the Zn(2+) pocket. Helical transmembrane passes span 151–171 and 195–215; these read VLVATIAATIAGAIGFLANMA and IGAILMIIIVPIIATIVQLAI. E220 is a binding site for Zn(2+).

Belongs to the peptidase M48B family. Zn(2+) serves as cofactor.

The protein resides in the cell inner membrane. The polypeptide is Protease HtpX homolog (Aquifex aeolicus (strain VF5)).